The primary structure comprises 147 residues: Basic phospholipase A2 beta-bungarotoxin A2 chain (147 aa).

The signal sequence occupies residues 1-19 (MYPAHLLVLSAVCVSLLGA). A propeptide spanning residues 20 to 27 (ANIPPYPL) is cleaved from the precursor. Intrachain disulfides connect Cys-54–Cys-146, Cys-56–Cys-72, Cys-71–Cys-127, Cys-78–Cys-120, Cys-88–Cys-113, and Cys-106–Cys-118. Ca(2+) is bound by residues Tyr-55, Gly-57, and Gly-59. The active site involves His-75. Residue Asp-76 coordinates Ca(2+). Asp-121 is an active-site residue.

The protein belongs to the phospholipase A2 family. Group I subfamily. D49 sub-subfamily. As to quaternary structure, heterodimer; disulfide-linked. The A chains have phospholipase A2 activity and the B chains show homology with the basic protease inhibitors. It depends on Ca(2+) as a cofactor. Expressed by the venom gland.

It is found in the secreted. It carries out the reaction a 1,2-diacyl-sn-glycero-3-phosphocholine + H2O = a 1-acyl-sn-glycero-3-phosphocholine + a fatty acid + H(+). Functionally, snake venom phospholipase A2 (PLA2) that inhibits neuromuscular transmission by blocking acetylcholine release from the nerve termini. PLA2 catalyzes the calcium-dependent hydrolysis of the 2-acyl groups in 3-sn-phosphoglycerides. The polypeptide is Basic phospholipase A2 beta-bungarotoxin A2 chain (Bungarus caeruleus (Indian krait)).